Here is an 878-residue protein sequence, read N- to C-terminus: Pyruvate, phosphate dikinase (878 aa).

Residues 1–347 (MKKLIYYFGS…LYILQTRTAK (347 aa)) are N-terminal. Residue arginine 96 coordinates ATP. Residues 348–404 (RTAIAAINIAVQMVEEKLISKEQALMRIDPESLNQLLHTRIDYSKGLTSIAEGLPAS) are linker 1. The tract at residues 405 to 502 (PGAATGIAVF…VIKQGDIITI (98 aa)) is central. The residue at position 457 (threonine 457) is a Phosphothreonine; by PDRP1. The active-site Tele-phosphohistidine intermediate is histidine 459. Positions 503–537 (DGGSGKIFLGEMPLIQPTFSEESKLILDWADEISS) are linker 2. Positions 538 to 878 (LKVRANAETV…ASAQAKIKHG (341 aa)) are C-terminal. Residues arginine 565, arginine 621, glutamate 749, glycine 770, threonine 771, asparagine 772, and aspartate 773 each contribute to the substrate site. Glutamate 749 lines the Mg(2+) pocket. Residue aspartate 773 participates in Mg(2+) binding. Cysteine 835 serves as the catalytic Proton donor.

Belongs to the PEP-utilizing enzyme family. Homodimer. Mg(2+) serves as cofactor. Post-translationally, phosphorylation of Thr-457 in the dark inactivates the enzyme. Dephosphorylation upon light stimulation reactivates the enzyme.

The catalysed reaction is pyruvate + phosphate + ATP = phosphoenolpyruvate + AMP + diphosphate + H(+). Its activity is regulated as follows. Activated by light-induced dephosphorylation. Inhibited by dark-induced phosphorylation. Both reactions are catalyzed by PDRP1. Its function is as follows. Catalyzes the reversible phosphorylation of pyruvate and phosphate. This is Pyruvate, phosphate dikinase (ppdK) from Rickettsia felis (strain ATCC VR-1525 / URRWXCal2) (Rickettsia azadi).